Reading from the N-terminus, the 411-residue chain is LIM domain-binding protein 1 (411 aa).

S2 is subject to N-acetylserine. Residue T61 is modified to Phosphothreonine. Residues S265 and S302 each carry the phosphoserine modification. Disordered regions lie at residues 284–330 and 367–411; these read PPAE…TFAL and DAAN…QASQ. Low complexity predominate over residues 302 to 318; it reads SGGSTMSSGGGNTNNSN. One can recognise an LIM interaction domain (LID) domain in the interval 336 to 375; it reads DVMVVGEPTLMGGEFGDEDERLITRLENTQFDAANGIDDE.

The protein belongs to the LDB family. In terms of assembly, interacts with ESR1. Forms homodimers and heterodimers. Interacts with and activates LHX1/LIM1. Interacts with the LIM domains of ISL1 and LMO2. Can assemble in a complex with LMO2 and TAL1/SCL but does not interact with TAL1/SCL directly. Strongly interacts with the LIM2 domain of LMX1A and more weakly with the LIM1 domain. Homodimerization is not required for, and does not effect, LMX1A-binding. Component of a nuclear TAL-1 complex composed at least of CBFA2T3, LDB1, TAL1 and TCF3. Interacts with LHX6 and LHX9. At neuronal promoters, forms a complex with LHX3 involved in the specification of interneurons, in motor neurons, it is displaced by ISL1 to form a ternary complex in which ISL1 contacts both LHX3 and LDB1. Interacts with SLK; leading to negatively regulate SLK kinase activity. Interacts with YWHAZ. Interacts with PRDM1/BLIMP1. Interacts with LMO4. Interacts with RLIM/RNF12; the interaction inhibits the ubiquitination of LMO proteins. In terms of processing, ubiquitinated by RLIM/RNF12, leading to its degradation by the proteasome. As to expression, expressed in multiple adult tissues including heart, brain, liver, kidney, testis, lung and muscle, with expression highest in the pituitary gland and skin.

The protein resides in the nucleus. Functionally, binds to the LIM domain of a wide variety of LIM domain-containing transcription factors. May regulate the transcriptional activity of LIM-containing proteins by determining specific partner interactions. Plays a role in the development of interneurons and motor neurons in cooperation with LHX3 and ISL1. Acts synergistically with LHX1/LIM1 in axis formation and activation of gene expression. Acts with LMO2 in the regulation of red blood cell development, maintaining erythroid precursors in an immature state. The protein is LIM domain-binding protein 1 (Ldb1) of Mus musculus (Mouse).